Here is a 151-residue protein sequence, read N- to C-terminus: Large ribosomal subunit protein bL9 (151 aa).

It belongs to the bacterial ribosomal protein bL9 family.

Its function is as follows. Binds to the 23S rRNA. The protein is Large ribosomal subunit protein bL9 of Mycobacteroides abscessus (strain ATCC 19977 / DSM 44196 / CCUG 20993 / CIP 104536 / JCM 13569 / NCTC 13031 / TMC 1543 / L948) (Mycobacterium abscessus).